A 385-amino-acid polypeptide reads, in one-letter code: MATGDVKGCIRKLEQRLRTLNYPRDVDYSGLIKGDPSAFLPIISYTFTCYSTSIAEILISLGIELATKSDLRFIEAVYKVLRDVFNYKPILTKQQFLQCAFSERKIQIICDIVDCVVKKHKEITGQNKIKNQPVKKIVSAKDQCEVFYPEDMFVQLSVKTEMSTQKKPLVERHTGSEFQLQTKCYKSALLEEAEEEEPTSDCEEDSHLQREMGSPFETAEETPNSEQVELLRKQLAECQEKLQRLDCVEERLQSLETSVKGKIIIDETDWNNLLGRVLLLETERLLQSKKSDLPEFARISEHRTSSRMANEICSNLKTKADIPESHHQSSGYSSVLSADTSPIAIDINYSSLTEESKETTKQRMERITKMMEETSELLKFSNNTS.

The interval 11 to 191 (RKLEQRLRTL…TKCYKSALLE (181 aa)) is binds with microtubules and centrioles. The segment covering 194–204 (EEEEPTSDCEE) has biased composition (acidic residues). The tract at residues 194 to 224 (EEEEPTSDCEEDSHLQREMGSPFETAEETPN) is disordered. 2 coiled-coil regions span residues 224 to 263 (NSEQ…KGKI) and 353 to 379 (TEES…ELLK).

Binds to centriolar microtubules.

The protein localises to the cytoplasm. It localises to the cytoskeleton. Its subcellular location is the microtubule organizing center. It is found in the centrosome. The protein resides in the centriole. The protein localises to the spindle pole. It localises to the midbody. Its function is as follows. Centriole-enriched microtubule-binding protein involved in centriole biogenesis. In collaboration with CEP295 and POC1B, is required for the centriole-to-centrosome conversion by ensuring the formation of bona fide centriole wall. Functions as a linker component that maintains centrosome cohesion. Associates with CROCC and regulates its stability and localization to the centrosome. The sequence is that of Centrosomal protein of 44 kDa (cep44) from Xenopus tropicalis (Western clawed frog).